The chain runs to 117 residues: 16 kDa protein (117 aa).

The polypeptide is 16 kDa protein (Tobacco rattle virus (strain PLB)).